The primary structure comprises 567 residues: Urease subunit alpha (567 aa).

In terms of domain architecture, Urease spans 128-567 (GGVDTHVHYI…LPLAQRYHLF (440 aa)). His-133, His-135, and Lys-216 together coordinate Ni(2+). The residue at position 216 (Lys-216) is an N6-carboxylysine. His-218 is a substrate binding site. Ni(2+) is bound by residues His-245 and His-271. The active-site Proton donor is His-319. Ni(2+) is bound at residue Asp-359.

It belongs to the metallo-dependent hydrolases superfamily. Urease alpha subunit family. Heterotrimer of UreA (gamma), UreB (beta) and UreC (alpha) subunits. Three heterotrimers associate to form the active enzyme. Requires Ni cation as cofactor. Post-translationally, carboxylation allows a single lysine to coordinate two nickel ions.

The protein localises to the cytoplasm. The enzyme catalyses urea + 2 H2O + H(+) = hydrogencarbonate + 2 NH4(+). The protein operates within nitrogen metabolism; urea degradation; CO(2) and NH(3) from urea (urease route): step 1/1. In Pseudoalteromonas translucida (strain TAC 125), this protein is Urease subunit alpha.